We begin with the raw amino-acid sequence, 208 residues long: Imidazoleglycerol-phosphate dehydratase (208 aa).

Belongs to the imidazoleglycerol-phosphate dehydratase family.

Its subcellular location is the cytoplasm. It catalyses the reaction D-erythro-1-(imidazol-4-yl)glycerol 3-phosphate = 3-(imidazol-4-yl)-2-oxopropyl phosphate + H2O. The protein operates within amino-acid biosynthesis; L-histidine biosynthesis; L-histidine from 5-phospho-alpha-D-ribose 1-diphosphate: step 6/9. This Mycobacterium sp. (strain JLS) protein is Imidazoleglycerol-phosphate dehydratase.